The chain runs to 418 residues: Enolase (418 aa).

Position 162 (Q162) interacts with (2R)-2-phosphoglycerate. The active-site Proton donor is the E204. Mg(2+)-binding residues include D241, E283, and D309. (2R)-2-phosphoglycerate-binding residues include K334, R363, S364, and K385. Catalysis depends on K334, which acts as the Proton acceptor.

This sequence belongs to the enolase family. The cofactor is Mg(2+).

The protein localises to the cytoplasm. It is found in the secreted. The protein resides in the cell surface. The catalysed reaction is (2R)-2-phosphoglycerate = phosphoenolpyruvate + H2O. It functions in the pathway carbohydrate degradation; glycolysis; pyruvate from D-glyceraldehyde 3-phosphate: step 4/5. Its function is as follows. Catalyzes the reversible conversion of 2-phosphoglycerate (2-PG) into phosphoenolpyruvate (PEP). It is essential for the degradation of carbohydrates via glycolysis. The polypeptide is Enolase (Pelagibacter ubique (strain HTCC1062)).